A 488-amino-acid polypeptide reads, in one-letter code: Ribulose bisphosphate carboxylase large chain (488 aa).

Substrate is bound by residues asparagine 127 and threonine 177. The active-site Proton acceptor is the lysine 179. A substrate-binding site is contributed by lysine 181. Mg(2+) is bound by residues lysine 205, aspartate 207, and glutamate 208. N6-carboxylysine is present on lysine 205. Histidine 297 acts as the Proton acceptor in catalysis. The substrate site is built by arginine 298, histidine 330, and serine 382.

The protein belongs to the RuBisCO large chain family. Type I subfamily. As to quaternary structure, heterohexadecamer of 8 large chains and 8 small chains. It depends on Mg(2+) as a cofactor.

It is found in the plastid. The protein localises to the chloroplast. The catalysed reaction is 2 (2R)-3-phosphoglycerate + 2 H(+) = D-ribulose 1,5-bisphosphate + CO2 + H2O. The enzyme catalyses D-ribulose 1,5-bisphosphate + O2 = 2-phosphoglycolate + (2R)-3-phosphoglycerate + 2 H(+). In terms of biological role, ruBisCO catalyzes two reactions: the carboxylation of D-ribulose 1,5-bisphosphate, the primary event in carbon dioxide fixation, as well as the oxidative fragmentation of the pentose substrate in the photorespiration process. Both reactions occur simultaneously and in competition at the same active site. This Porphyridium aerugineum (Red microalga) protein is Ribulose bisphosphate carboxylase large chain.